The primary structure comprises 611 residues: Chaperone protein DnaK (611 aa).

Thr173 is modified (phosphothreonine; by autocatalysis). Residues 579–592 (AAGQAEGAQGAQDA) show a composition bias toward low complexity. The tract at residues 579-598 (AAGQAEGAQGAQDAGAKKDN) is disordered.

The protein belongs to the heat shock protein 70 family.

Its function is as follows. Acts as a chaperone. This Bacillus cereus (strain AH187) protein is Chaperone protein DnaK.